Reading from the N-terminus, the 226-residue chain is Isoprenyl transferase (226 aa).

Asp12 is an active-site residue. Asp12 contributes to the Mg(2+) binding site. Substrate is bound by residues 13-16 (GNAR), Trp17, Lys25, His29, and 57-59 (SSE). The active-site Proton acceptor is Asn60. Residues Trp61, Arg63, Arg174, and 180–182 (RIS) each bind substrate. Glu193 provides a ligand contact to Mg(2+).

Belongs to the UPP synthase family. Homodimer. It depends on Mg(2+) as a cofactor.

Catalyzes the condensation of isopentenyl diphosphate (IPP) with allylic pyrophosphates generating different type of terpenoids. The chain is Isoprenyl transferase from Rickettsia bellii (strain RML369-C).